We begin with the raw amino-acid sequence, 117 residues long: MTFEMLYSKIHRATITDANLNYIGSITIDEDLAKLAKLREGMKVEIVDVNNGERFSTYVILGKKRGEICVNGAAARKVAIGDVVIILAYASMNEDEINAHKPSIVLVDEKNEILEKG.

Catalysis depends on Ser-25, which acts as the Schiff-base intermediate with substrate; via pyruvic acid. At Ser-25 the chain carries Pyruvic acid (Ser). Thr-57 provides a ligand contact to substrate. The active-site Proton donor is the Tyr-58. 72–74 (GAA) is a binding site for substrate.

It belongs to the PanD family. As to quaternary structure, heterooctamer of four alpha and four beta subunits. The cofactor is pyruvate. In terms of processing, is synthesized initially as an inactive proenzyme, which is activated by self-cleavage at a specific serine bond to produce a beta-subunit with a hydroxyl group at its C-terminus and an alpha-subunit with a pyruvoyl group at its N-terminus.

The protein localises to the cytoplasm. The enzyme catalyses L-aspartate + H(+) = beta-alanine + CO2. It participates in cofactor biosynthesis; (R)-pantothenate biosynthesis; beta-alanine from L-aspartate: step 1/1. Its function is as follows. Catalyzes the pyruvoyl-dependent decarboxylation of aspartate to produce beta-alanine. In Helicobacter pylori (strain ATCC 700392 / 26695) (Campylobacter pylori), this protein is Aspartate 1-decarboxylase.